A 137-amino-acid polypeptide reads, in one-letter code: Large ribosomal subunit protein uL16 (137 aa).

It belongs to the universal ribosomal protein uL16 family. In terms of assembly, part of the 50S ribosomal subunit.

Binds 23S rRNA and is also seen to make contacts with the A and possibly P site tRNAs. This chain is Large ribosomal subunit protein uL16, found in Bartonella bacilliformis (strain ATCC 35685 / KC583 / Herrer 020/F12,63).